A 502-amino-acid chain; its full sequence is ATP synthase subunit alpha (502 aa).

The segment at 115–137 (VDGLGPVETTETRPIESPAPGVM) is disordered. 169–176 (GDRQTGKT) provides a ligand contact to ATP.

Belongs to the ATPase alpha/beta chains family. As to quaternary structure, F-type ATPases have 2 components, CF(1) - the catalytic core - and CF(0) - the membrane proton channel. CF(1) has five subunits: alpha(3), beta(3), gamma(1), delta(1), epsilon(1). CF(0) has three main subunits: a(1), b(2) and c(9-12). The alpha and beta chains form an alternating ring which encloses part of the gamma chain. CF(1) is attached to CF(0) by a central stalk formed by the gamma and epsilon chains, while a peripheral stalk is formed by the delta and b chains.

It localises to the cell membrane. The catalysed reaction is ATP + H2O + 4 H(+)(in) = ADP + phosphate + 5 H(+)(out). Its function is as follows. Produces ATP from ADP in the presence of a proton gradient across the membrane. The alpha chain is a regulatory subunit. This chain is ATP synthase subunit alpha, found in Geobacillus stearothermophilus (Bacillus stearothermophilus).